The primary structure comprises 407 residues: Imidazolonepropionase (407 aa).

2 residues coordinate Fe(3+): His-74 and His-76. 2 residues coordinate Zn(2+): His-74 and His-76. Arg-83, Tyr-146, and His-179 together coordinate 4-imidazolone-5-propanoate. Tyr-146 contacts N-formimidoyl-L-glutamate. His-244 contributes to the Fe(3+) binding site. His-244 is a binding site for Zn(2+). 4-imidazolone-5-propanoate is bound at residue Gln-247. Asp-319 is a binding site for Fe(3+). Asp-319 lines the Zn(2+) pocket. N-formimidoyl-L-glutamate is bound by residues Asn-321 and Gly-323. Position 324 (Thr-324) interacts with 4-imidazolone-5-propanoate.

Belongs to the metallo-dependent hydrolases superfamily. HutI family. Requires Zn(2+) as cofactor. Fe(3+) serves as cofactor.

Its subcellular location is the cytoplasm. The enzyme catalyses 4-imidazolone-5-propanoate + H2O = N-formimidoyl-L-glutamate. It participates in amino-acid degradation; L-histidine degradation into L-glutamate; N-formimidoyl-L-glutamate from L-histidine: step 3/3. Its function is as follows. Catalyzes the hydrolytic cleavage of the carbon-nitrogen bond in imidazolone-5-propanoate to yield N-formimidoyl-L-glutamate. It is the third step in the universal histidine degradation pathway. The polypeptide is Imidazolonepropionase (Salmonella typhimurium (strain LT2 / SGSC1412 / ATCC 700720)).